A 205-amino-acid chain; its full sequence is tRNA (guanine-N(7)-)-methyltransferase (205 aa).

Residues Glu-36, Glu-61, Asp-88, and Asp-109 each coordinate S-adenosyl-L-methionine. The active site involves Asp-109. Substrate is bound at residue Lys-113. The tract at residues 115 to 120 is interaction with RNA; it reads RHEKRR. Residues Asp-145 and 183–186 contribute to the substrate site; that span reads TGYE.

It belongs to the class I-like SAM-binding methyltransferase superfamily. TrmB family.

It carries out the reaction guanosine(46) in tRNA + S-adenosyl-L-methionine = N(7)-methylguanosine(46) in tRNA + S-adenosyl-L-homocysteine. Its pathway is tRNA modification; N(7)-methylguanine-tRNA biosynthesis. Functionally, catalyzes the formation of N(7)-methylguanine at position 46 (m7G46) in tRNA. This Mycoplasmopsis agalactiae (strain NCTC 10123 / CIP 59.7 / PG2) (Mycoplasma agalactiae) protein is tRNA (guanine-N(7)-)-methyltransferase.